The primary structure comprises 208 residues: Large ribosomal subunit protein uL4 (208 aa).

A disordered region spans residues 45–89; the sequence is RQGTHAHKNRSAVSGGGKKPWRQKGTGRARQGSTRSPQWRGGGTV.

This sequence belongs to the universal ribosomal protein uL4 family. In terms of assembly, part of the 50S ribosomal subunit.

Functionally, one of the primary rRNA binding proteins, this protein initially binds near the 5'-end of the 23S rRNA. It is important during the early stages of 50S assembly. It makes multiple contacts with different domains of the 23S rRNA in the assembled 50S subunit and ribosome. Its function is as follows. Forms part of the polypeptide exit tunnel. The sequence is that of Large ribosomal subunit protein uL4 from Lactococcus lactis subsp. cremoris (strain SK11).